The following is a 94-amino-acid chain: Phosphoribosyl-ATP pyrophosphatase (94 aa).

It belongs to the PRA-PH family.

Its subcellular location is the cytoplasm. It catalyses the reaction 1-(5-phospho-beta-D-ribosyl)-ATP + H2O = 1-(5-phospho-beta-D-ribosyl)-5'-AMP + diphosphate + H(+). It participates in amino-acid biosynthesis; L-histidine biosynthesis; L-histidine from 5-phospho-alpha-D-ribose 1-diphosphate: step 2/9. The protein is Phosphoribosyl-ATP pyrophosphatase (hisE) of Saccharolobus solfataricus (strain ATCC 35092 / DSM 1617 / JCM 11322 / P2) (Sulfolobus solfataricus).